A 370-amino-acid polypeptide reads, in one-letter code: Chorismate synthase (370 aa).

Residue R47 participates in NADP(+) binding. FMN contacts are provided by residues 124–126, G286, 301–305, and R327; these read RSS and KPTAT.

This sequence belongs to the chorismate synthase family. Homotetramer. Requires FMNH2 as cofactor.

It catalyses the reaction 5-O-(1-carboxyvinyl)-3-phosphoshikimate = chorismate + phosphate. It functions in the pathway metabolic intermediate biosynthesis; chorismate biosynthesis; chorismate from D-erythrose 4-phosphate and phosphoenolpyruvate: step 7/7. Functionally, catalyzes the anti-1,4-elimination of the C-3 phosphate and the C-6 proR hydrogen from 5-enolpyruvylshikimate-3-phosphate (EPSP) to yield chorismate, which is the branch point compound that serves as the starting substrate for the three terminal pathways of aromatic amino acid biosynthesis. This reaction introduces a second double bond into the aromatic ring system. The polypeptide is Chorismate synthase (Trichodesmium erythraeum (strain IMS101)).